The following is a 256-amino-acid chain: MLRIADKTFDSHLFTGTGKFASSQLMVEAIRASGSQLVTLAMKRVDLRQHNDAILAPLIEAGVTLLPNTSGAKTAEEAIFAAQLAREALGTHWLKLEIHPDARWLLPDPIETLKAAEALVKQGFVVLPYCGADPVLCKRLEEVGCAAVMPLGAPIGSNQGLETKAMLEIIIQQATVPVVVDAGIGVPSHAAQALEMGADAVLVNTAIAVADDPVMMATAFRLAVEAGLLARQAVPGNRSTYASATSPLTGFLEALA.

Lysine 95 acts as the Schiff-base intermediate with DXP in catalysis. 1-deoxy-D-xylulose 5-phosphate contacts are provided by residues glycine 156, 182-183, and 204-205; these read AG and NT.

It belongs to the ThiG family. As to quaternary structure, homotetramer. Forms heterodimers with either ThiH or ThiS.

The protein resides in the cytoplasm. It catalyses the reaction [ThiS sulfur-carrier protein]-C-terminal-Gly-aminoethanethioate + 2-iminoacetate + 1-deoxy-D-xylulose 5-phosphate = [ThiS sulfur-carrier protein]-C-terminal Gly-Gly + 2-[(2R,5Z)-2-carboxy-4-methylthiazol-5(2H)-ylidene]ethyl phosphate + 2 H2O + H(+). It functions in the pathway cofactor biosynthesis; thiamine diphosphate biosynthesis. Catalyzes the rearrangement of 1-deoxy-D-xylulose 5-phosphate (DXP) to produce the thiazole phosphate moiety of thiamine. Sulfur is provided by the thiocarboxylate moiety of the carrier protein ThiS. In vitro, sulfur can be provided by H(2)S. This Salmonella choleraesuis (strain SC-B67) protein is Thiazole synthase.